Here is a 398-residue protein sequence, read N- to C-terminus: 1-deoxy-D-xylulose 5-phosphate reductoisomerase (398 aa).

NADPH is bound by residues threonine 10, glycine 11, serine 12, isoleucine 13, lysine 37, asparagine 38, and asparagine 124. Residue lysine 125 coordinates 1-deoxy-D-xylulose 5-phosphate. Glutamate 126 lines the NADPH pocket. A Mn(2+)-binding site is contributed by aspartate 150. 1-deoxy-D-xylulose 5-phosphate is bound by residues serine 151, glutamate 152, serine 186, and histidine 209. Glutamate 152 serves as a coordination point for Mn(2+). An NADPH-binding site is contributed by glycine 215. The 1-deoxy-D-xylulose 5-phosphate site is built by serine 222, asparagine 227, lysine 228, and glutamate 231. Glutamate 231 contacts Mn(2+).

It belongs to the DXR family. Homodimer. It depends on Mg(2+) as a cofactor. Mn(2+) serves as cofactor.

It carries out the reaction 2-C-methyl-D-erythritol 4-phosphate + NADP(+) = 1-deoxy-D-xylulose 5-phosphate + NADPH + H(+). It participates in isoprenoid biosynthesis; isopentenyl diphosphate biosynthesis via DXP pathway; isopentenyl diphosphate from 1-deoxy-D-xylulose 5-phosphate: step 1/6. Catalyzes the NADPH-dependent rearrangement and reduction of 1-deoxy-D-xylulose-5-phosphate (DXP) to 2-C-methyl-D-erythritol 4-phosphate (MEP). This chain is 1-deoxy-D-xylulose 5-phosphate reductoisomerase, found in Buchnera aphidicola subsp. Acyrthosiphon pisum (strain 5A).